Reading from the N-terminus, the 549-residue chain is MARTPGPAPLCPGGGKAQLSSAFPPAAGLLLPAPTPPPLLLLLIPLLLFSRLCGALAGSIIVEPHVTAVWGKNVSLKCLIEVNETITQISWEKIHGKSTQTVAVHHPQYGFSVQGDYQGRVLFKNYSLNDATITLHNIGFSDSGKYICKAVTFPLGNAQSSTTVTVLVEPTVSLIKGPDSLIDGGNETVAAVCVAATGKPVAQIDWEGDLGEMESSTTSFPNETATIVSQYKLFPTRFARGRRITCVVKHPALEKDIRYSFILDIQYAPEVSVTGYDGNWFVGRKGVNLKCNADANPPPFKSVWSRLDGQWPDGLLASDNTLHFVHPLTVNYSGVYVCKVSNSLGQRSDQKVIYISDPPTTTTLQPTVQWHSSPADVQDIATEHKKLPFPLSTLATLKDDTIGTIIASVVGGALFLVLVSILAGVFCYRRRRTFRGDYFAKNYIPPSDMQKESQIDVLHQDELDSYPDSVKKENKNPVNNLIRKDYLEEPEKTQWNNVENLTRFERPMDYYEDLKMGMKFVSDERYNESEDGLVSHVDGSVISRREWYV.

Residues 1-57 form the signal peptide; that stretch reads MARTPGPAPLCPGGGKAQLSSAFPPAAGLLLPAPTPPPLLLLLIPLLLFSRLCGALA. One can recognise an Ig-like V-type domain in the interval 58–165; sequence GSIIVEPHVT…GNAQSSTTVT (108 aa). Residues 58-404 lie on the Extracellular side of the membrane; it reads GSIIVEPHVT…ATLKDDTIGT (347 aa). 6 N-linked (GlcNAc...) asparagine glycosylation sites follow: asparagine 73, asparagine 83, asparagine 125, asparagine 186, asparagine 222, and asparagine 331. A disulfide bridge connects residues cysteine 78 and cysteine 148. Ig-like C2-type domains lie at 170 to 258 and 269 to 354; these read PTVS…KDIR and PEVS…KVIY. Disulfide bonds link cysteine 193–cysteine 246 and cysteine 291–cysteine 338. A helical transmembrane segment spans residues 405–425; the sequence is IIASVVGGALFLVLVSILAGV. The Cytoplasmic portion of the chain corresponds to 426-549; that stretch reads FCYRRRRTFR…SVISRREWYV (124 aa).

Belongs to the nectin family. In terms of assembly, cis- and trans-homodimer. Can form trans-heterodimers with NECTIN1, NECTIN2, PVR, IGSF4B/Necl-1 and with IGSF4. Interaction between NECTIN1 and NECTIN3 on the pre- and postsynaptic sites, respectively, initiates the formation of puncta adherentia junctions between axons and dendrites. Interacts (via Cytoplasmic domain) with AFDN, providing a connection with the actin cytoskeleton. Binds with low affinity to TIGIT. Ubiquitous with high expression in testes. Localized in spermatids at Sertoli-spermatid junctions. Expressed in ovarian granulosa cells, but only faintly expressed after ovulation.

It is found in the cell membrane. It localises to the postsynaptic cell membrane. The protein localises to the cell junction. Its subcellular location is the adherens junction. In terms of biological role, cell adhesion molecule that promotes cell-cell adhesion through heterophilic trans-interactions with nectins-like or other nectins, such as trans-interaction with NECTIN2 at Sertoli-spermatid junctions. Trans-interaction with PVR induces activation of CDC42 and RAC small G proteins through common signaling molecules such as SRC and RAP1. Induces endocytosis-mediated down-regulation of PVR from the cell surface, resulting in reduction of cell movement and proliferation. Involved in axon guidance by promoting contacts between the commissural axons and the floor plate cells. Also involved in the formation of cell-cell junctions, including adherens junctions and synapses. Promotes formation of checkerboard-like cellular pattern of hair cells and supporting cells in the auditory epithelium via heterophilic interaction with NECTIN1: NECTIN1 is present in the membrane of hair cells and associates with NECTIN3 on supporting cells, thereby mediating heterotypic adhesion between these two cell types. Plays a role in the morphology of the ciliary body. The chain is Nectin-3 from Mus musculus (Mouse).